The following is a 135-amino-acid chain: Large ribosomal subunit protein uL16c (135 aa).

The protein belongs to the universal ribosomal protein uL16 family. As to quaternary structure, part of the 50S ribosomal subunit.

The protein resides in the plastid. The protein is Large ribosomal subunit protein uL16c of Epifagus virginiana (Beechdrops).